Here is a 184-residue protein sequence, read N- to C-terminus: Endoribonuclease YbeY (184 aa).

Positions 118, 122, and 128 each coordinate Zn(2+).

The protein belongs to the endoribonuclease YbeY family. Requires Zn(2+) as cofactor.

It localises to the cytoplasm. Its function is as follows. Single strand-specific metallo-endoribonuclease involved in late-stage 70S ribosome quality control and in maturation of the 3' terminus of the 16S rRNA. The polypeptide is Endoribonuclease YbeY (Nocardia farcinica (strain IFM 10152)).